Here is a 573-residue protein sequence, read N- to C-terminus: DEAD-box ATP-dependent RNA helicase 47A (573 aa).

The Q motif motif lies at 131–159; it reads KSFEELGLPPLLIDRLNKEGLTAPTEVQS. The region spanning 162-362 is the Helicase ATP-binding domain; the sequence is IPIISQKHDA…RSWGHDPVLV (201 aa). Residue 175–182 participates in ATP binding; sequence SYTGSGKT. The short motif at 293-296 is the DEAD box element; that stretch reads DEVD. The 145-residue stretch at 421–565 folds into the Helicase C-terminal domain; the sequence is TLRRCIHALE…PCEFTEGKLL (145 aa).

It belongs to the DEAD box helicase family.

It catalyses the reaction ATP + H2O = ADP + phosphate + H(+). In Oryza sativa subsp. japonica (Rice), this protein is DEAD-box ATP-dependent RNA helicase 47A.